We begin with the raw amino-acid sequence, 379 residues long: Cobalt-precorrin-5B C(1)-methyltransferase (379 aa).

It belongs to the CbiD family.

It catalyses the reaction Co-precorrin-5B + S-adenosyl-L-methionine = Co-precorrin-6A + S-adenosyl-L-homocysteine. The protein operates within cofactor biosynthesis; adenosylcobalamin biosynthesis; cob(II)yrinate a,c-diamide from sirohydrochlorin (anaerobic route): step 6/10. Functionally, catalyzes the methylation of C-1 in cobalt-precorrin-5B to form cobalt-precorrin-6A. The polypeptide is Cobalt-precorrin-5B C(1)-methyltransferase (Salmonella heidelberg (strain SL476)).